The chain runs to 647 residues: Spindle pole body-associated protein VIK1 (647 aa).

The segment covering 36–51 (NTTNTMNGSRPSSMKS) has biased composition (polar residues). The segment at 36-55 (NTTNTMNGSRPSSMKSSLAL) is disordered. Positions 202–350 (DHEITEEISQ…SKQEKFYNDT (149 aa)) form a coiled coil.

As to quaternary structure, interacts with KAR3; the interaction is direct.

The protein localises to the cytoplasm. Its subcellular location is the cytoskeleton. It is found in the microtubule organizing center. It localises to the spindle pole body. The protein resides in the nucleus. In terms of biological role, together with the minus end-directed microtubule motor KAR3, plays a role in microtubule organization. Recruits KAR3 to microtubules, and together they may stabilize the polymers. The KAR3-VIK1 heterodimer cross-links anti-parallel microtubules. Targets and/or maintains KAR3 at the spindle pole body during vegetative growth. The polypeptide is Spindle pole body-associated protein VIK1 (VIK1) (Saccharomyces cerevisiae (strain ATCC 204508 / S288c) (Baker's yeast)).